The sequence spans 332 residues: Ketol-acid reductoisomerase (NADP(+)) (332 aa).

The KARI N-terminal Rossmann domain occupies 2 to 182 (AKVYIDKDAS…GATRAGVIET (181 aa)). NADP(+)-binding positions include 25–28 (YGSQ), Ser53, and 83–86 (DMVQ). Residue His108 is part of the active site. Gly134 serves as a coordination point for NADP(+). One can recognise a KARI C-terminal knotted domain in the interval 183–328 (TFKEETETDL…RQIREISLRG (146 aa)). 4 residues coordinate Mg(2+): Asp191, Glu195, Glu227, and Glu231. Ser252 lines the substrate pocket.

It belongs to the ketol-acid reductoisomerase family. Mg(2+) is required as a cofactor.

The catalysed reaction is (2R)-2,3-dihydroxy-3-methylbutanoate + NADP(+) = (2S)-2-acetolactate + NADPH + H(+). It carries out the reaction (2R,3R)-2,3-dihydroxy-3-methylpentanoate + NADP(+) = (S)-2-ethyl-2-hydroxy-3-oxobutanoate + NADPH + H(+). It functions in the pathway amino-acid biosynthesis; L-isoleucine biosynthesis; L-isoleucine from 2-oxobutanoate: step 2/4. The protein operates within amino-acid biosynthesis; L-valine biosynthesis; L-valine from pyruvate: step 2/4. In terms of biological role, involved in the biosynthesis of branched-chain amino acids (BCAA). Catalyzes an alkyl-migration followed by a ketol-acid reduction of (S)-2-acetolactate (S2AL) to yield (R)-2,3-dihydroxy-isovalerate. In the isomerase reaction, S2AL is rearranged via a Mg-dependent methyl migration to produce 3-hydroxy-3-methyl-2-ketobutyrate (HMKB). In the reductase reaction, this 2-ketoacid undergoes a metal-dependent reduction by NADPH to yield (R)-2,3-dihydroxy-isovalerate. The polypeptide is Ketol-acid reductoisomerase (NADP(+)) (Sulfurisphaera tokodaii (strain DSM 16993 / JCM 10545 / NBRC 100140 / 7) (Sulfolobus tokodaii)).